The sequence spans 321 residues: Beta-1,3-N-acetylglucosaminyltransferase manic fringe (321 aa).

Topologically, residues 1 to 7 (MQCRLPR) are cytoplasmic. Residues 8–27 (GLAGALLTLLCMGLLCLRYH) form a helical; Signal-anchor for type II membrane protein membrane-spanning segment. Over 28–321 (LNLSPQRVQE…TPWCPQLGAR (294 aa)) the chain is Lumenal. A substrate-binding site is contributed by Arg-70. Asn-109 carries N-linked (GlcNAc...) asparagine glycosylation. 2 disulfides stabilise this stretch: Cys-110-Cys-121 and Cys-139-Cys-202. Residue Asp-143 coordinates substrate. Asp-144 serves as a coordination point for Mn(2+). Residue Asn-185 is glycosylated (N-linked (GlcNAc...) asparagine). Asp-232 is a catalytic residue. His-256 contributes to the Mn(2+) binding site. A disulfide bridge links Cys-306 with Cys-315.

It belongs to the glycosyltransferase 31 family. Mn(2+) is required as a cofactor.

It is found in the golgi apparatus membrane. It catalyses the reaction 3-O-(alpha-L-fucosyl)-L-threonyl-[EGF-like domain protein] + UDP-N-acetyl-alpha-D-glucosamine = 3-O-(N-acetyl-beta-D-glucosaminyl-(1-&gt;3)-alpha-L-fucosyl)-L-threonyl-[EGF-like domain protein] + UDP + H(+). The catalysed reaction is 3-O-(alpha-L-fucosyl)-L-seryl-[EGF-like domain protein] + UDP-N-acetyl-alpha-D-glucosamine = 3-O-(N-acetyl-beta-D-glucosaminyl-(1-&gt;3)-alpha-L-fucosyl)-L-seryl-[EGF-like domain protein] + UDP + H(+). Functionally, glycosyltransferase that initiates the elongation of O-linked fucose residues attached to EGF-like repeats in the extracellular domain of Notch molecules. Modulates NOTCH1 activity by modifying O-fucose residues at specific EGF-like domains resulting in inhibition of NOTCH1 activation by JAG1 and enhancement of NOTCH1 activation by DLL1 via an increase in its binding to DLL1. This Pan troglodytes (Chimpanzee) protein is Beta-1,3-N-acetylglucosaminyltransferase manic fringe (MFNG).